We begin with the raw amino-acid sequence, 125 residues long: Small ribosomal subunit protein eS6 (125 aa).

This sequence belongs to the eukaryotic ribosomal protein eS6 family.

This Thermococcus onnurineus (strain NA1) protein is Small ribosomal subunit protein eS6.